A 291-amino-acid polypeptide reads, in one-letter code: Ribosomal RNA small subunit methyltransferase H (291 aa).

S-adenosyl-L-methionine-binding positions include G31–Y33, D49, F76, D97, and Q104.

Belongs to the methyltransferase superfamily. RsmH family.

It localises to the cytoplasm. The enzyme catalyses cytidine(1402) in 16S rRNA + S-adenosyl-L-methionine = N(4)-methylcytidine(1402) in 16S rRNA + S-adenosyl-L-homocysteine + H(+). Specifically methylates the N4 position of cytidine in position 1402 (C1402) of 16S rRNA. This is Ribosomal RNA small subunit methyltransferase H from Anaplasma marginale (strain Florida).